The chain runs to 444 residues: C4-dicarboxylate transport protein (444 aa).

Helical transmembrane passes span 17-37 (PFYTHLYVQVLAAIAAGILLG), 57-77 (LVKMIIAPVIFLTVATGIAGM), 92-112 (LYFLTFSTLALIIGLIVANVV), 139-159 (EQSIVGFLTNIIPTTIVGAFA), 161-181 (GDILQVLFFSVLFGIALAMVG), 201-221 (LVAILMKAAPIGAFGAMAFTI), 234-254 (MLIGTFYITSLLFVLVVLGAV), 320-340 (IYMTLAALFIAQATGIQLSWG), and 368-388 (AATLSVVPSVPVAGMALILGI).

This sequence belongs to the dicarboxylate/amino acid:cation symporter (DAACS) (TC 2.A.23) family.

Its subcellular location is the cell inner membrane. Functionally, responsible for the transport of dicarboxylates such as succinate, fumarate, and malate from the periplasm across the membrane. The sequence is that of C4-dicarboxylate transport protein from Rhizobium johnstonii (strain DSM 114642 / LMG 32736 / 3841) (Rhizobium leguminosarum bv. viciae).